Consider the following 435-residue polypeptide: MTWRVAVLLSLVLGAGAVPVGVDDPEDGGKHWVVIVAGSNGWYNYRHQADACHAYQIIHRNGIPDEQIIVMMYDDIANSEENPTPGVVINRPNGTDVYKGVLKDYTGEDVTPENFLAVLRGDAEAVKGKGSGKVLKSGPRDHVFIYFTDHGATGILVFPNDDLHVKDLNKTIRYMYEHKMYQKMVFYIEACESGSMMNHLPDDINVYATTAANPKESSYACYYDEERGTYLGDWYSVNWMEDSDVEDLTKETLHKQYHLVKSHTNTSHVMQYGNKSISTMKVMQFQGMKHRASSPISLPPVTHLDLTPSPDVPLTILKRKLLRTNDVKESQNLIGQIQQFLDARHVIEKSVHKIVSLLAGFGETAERHLSERTMLTAHDCYQEAVTHFRTHCFNWHSVTYEHALRYLYVLANLCEAPYPIDRIEMAMDKVCLSHY.

The signal sequence occupies residues 1–17 (MTWRVAVLLSLVLGAGA). N93 carries N-linked (GlcNAc...) asparagine glycosylation. H150 is an active-site residue. The N-linked (GlcNAc...) asparagine glycan is linked to N169. The active-site Nucleophile is C191. Residues N265 and N274 are each glycosylated (N-linked (GlcNAc...) asparagine). Positions 326-435 (DVKESQNLIG…AMDKVCLSHY (110 aa)) are excised as a propeptide. 2 disulfides stabilise this stretch: C380-C414 and C392-C431.

The protein belongs to the peptidase C13 family. In terms of assembly, homodimer before autocatalytic removal of the propeptide. Monomer after autocatalytic processing. May interact with integrins. Post-translationally, glycosylated. Activated by autocatalytic processing at pH 4. Detected in kidney proximal tubules (at protein level). Ubiquitous. Particularly abundant in kidney and placenta.

The protein resides in the lysosome. It catalyses the reaction Hydrolysis of proteins and small molecule substrates at -Asn-|-Xaa- bonds.. Its activity is regulated as follows. Inhibited by cystatin-C. In terms of biological role, has a strict specificity for hydrolysis of asparaginyl bonds. Can also cleave aspartyl bonds slowly, especially under acidic conditions. Involved in the processing of proteins for MHC class II antigen presentation in the lysosomal/endosomal system. Also involved in MHC class I antigen presentation in cross-presenting dendritic cells by mediating cleavage and maturation of Perforin-2 (MPEG1), thereby promoting antigen translocation in the cytosol. Required for normal lysosomal protein degradation in renal proximal tubules. Required for normal degradation of internalized EGFR. Plays a role in the regulation of cell proliferation via its role in EGFR degradation. The chain is Legumain (Lgmn) from Mus musculus (Mouse).